Here is a 144-residue protein sequence, read N- to C-terminus: Putative pre-16S rRNA nuclease (144 aa).

This sequence belongs to the YqgF nuclease family.

The protein localises to the cytoplasm. Its function is as follows. Could be a nuclease involved in processing of the 5'-end of pre-16S rRNA. This chain is Putative pre-16S rRNA nuclease, found in Chlorobium phaeobacteroides (strain BS1).